Reading from the N-terminus, the 490-residue chain is C-type lectin domain family 14 member A (490 aa).

The N-terminal stretch at 1–21 (MRPAFALCLLWQALWPGPGGG) is a signal peptide. Over 22 to 397 (EHPTADRAGC…TPQAFDSSSA (376 aa)) the chain is Extracellular. The region spanning 33-173 (ASGACYSLHH…LRANGYLCKY (141 aa)) is the C-type lectin domain. A disulfide bridge links Cys-143 with Cys-162. The N-linked (GlcNAc...) asparagine glycan is linked to Asn-189. The EGF-like domain maps to 245-287 (PCPGRYLRAGKCAELPNCLDDLGGFACECATGFELGKDGRSCV). The interval 286–349 (CVTSGEGQPT…VTSIPEIPRW (64 aa)) is disordered. A compositionally biased stretch (low complexity) spans 301-315 (VPTRRPPATATSPVP). N-linked (GlcNAc...) asparagine glycosylation occurs at Asn-381. The helical transmembrane segment at 398–418 (VVFIFVSTAVVVLVILTMTVL) threads the bilayer. Topologically, residues 419 to 490 (GLVKLCFHES…AESPLGSSDA (72 aa)) are cytoplasmic. Positions 428–461 (SPSSQPRKESMGPPGLESDPEPAALGSSSAHCTN) are disordered.

It is found in the membrane. The chain is C-type lectin domain family 14 member A (CLEC14A) from Homo sapiens (Human).